A 118-amino-acid polypeptide reads, in one-letter code: Acetylcholine receptor subunit beta (118 aa).

An N-terminal signal peptide occupies residues 1–15; it reads APTVALLLLCALCSA.

This sequence belongs to the ligand-gated ion channel (TC 1.A.9) family. Acetylcholine receptor (TC 1.A.9.1) subfamily. Beta-1/CHRNB1 sub-subfamily. As to quaternary structure, pentamer of two alpha chains, and one each of the beta, delta, and gamma chains.

Its subcellular location is the postsynaptic cell membrane. The protein localises to the cell membrane. The catalysed reaction is K(+)(in) = K(+)(out). It carries out the reaction Na(+)(in) = Na(+)(out). Functionally, after binding acetylcholine, the AChR responds by an extensive change in conformation that affects all subunits and leads to opening of an ion-conducting channel across the plasma membrane. The polypeptide is Acetylcholine receptor subunit beta (CHRNB1) (Gallus gallus (Chicken)).